Consider the following 934-residue polypeptide: Bifunctional uridylyltransferase/uridylyl-removing enzyme (934 aa).

Residues 1-379 are uridylyltransferase; it reads MSAHDLKLEE…TFSRRKRKLS (379 aa). Positions 380–736 are uridylyl-removing; that stretch reads DDGAFISENH…AKPHAFEAVT (357 aa). Residues 496–613 enclose the HD domain; it reads VDEHLLRCIA…IDFADTVQTM (118 aa). 2 ACT domains span residues 737–818 and 848–931; these read EITV…DMLA and VIEV…RSPQ.

It belongs to the GlnD family. The cofactor is Mg(2+).

The enzyme catalyses [protein-PII]-L-tyrosine + UTP = [protein-PII]-uridylyl-L-tyrosine + diphosphate. It catalyses the reaction [protein-PII]-uridylyl-L-tyrosine + H2O = [protein-PII]-L-tyrosine + UMP + H(+). With respect to regulation, uridylyltransferase (UTase) activity is inhibited by glutamine, while glutamine activates uridylyl-removing (UR) activity. In terms of biological role, modifies, by uridylylation and deuridylylation, the PII regulatory proteins (GlnB and homologs), in response to the nitrogen status of the cell that GlnD senses through the glutamine level. Under low glutamine levels, catalyzes the conversion of the PII proteins and UTP to PII-UMP and PPi, while under higher glutamine levels, GlnD hydrolyzes PII-UMP to PII and UMP (deuridylylation). Thus, controls uridylylation state and activity of the PII proteins, and plays an important role in the regulation of nitrogen assimilation and metabolism. This Brucella suis biovar 1 (strain 1330) protein is Bifunctional uridylyltransferase/uridylyl-removing enzyme.